The following is a 512-amino-acid chain: Maturase K (512 aa).

Belongs to the intron maturase 2 family. MatK subfamily.

It localises to the plastid. Its subcellular location is the chloroplast. Its function is as follows. Usually encoded in the trnK tRNA gene intron. Probably assists in splicing its own and other chloroplast group II introns. This Piper cenocladum (Ant piper) protein is Maturase K.